We begin with the raw amino-acid sequence, 547 residues long: Chaperonin GroEL 2 (547 aa).

ATP contacts are provided by residues 30–33 (TLGP), Lys51, 87–91 (DGTTT), Gly415, 479–481 (NAA), and Asp495. Residues 526–547 (KEESAAPAGGGMGGMGGMGGMM) form a disordered region. The segment covering 533 to 547 (AGGGMGGMGGMGGMM) has biased composition (gly residues).

It belongs to the chaperonin (HSP60) family. Forms a cylinder of 14 subunits composed of two heptameric rings stacked back-to-back. Interacts with the co-chaperonin GroES.

It localises to the cytoplasm. It catalyses the reaction ATP + H2O + a folded polypeptide = ADP + phosphate + an unfolded polypeptide.. Functionally, together with its co-chaperonin GroES, plays an essential role in assisting protein folding. The GroEL-GroES system forms a nano-cage that allows encapsulation of the non-native substrate proteins and provides a physical environment optimized to promote and accelerate protein folding. This chain is Chaperonin GroEL 2, found in Anaeromyxobacter sp. (strain Fw109-5).